A 206-amino-acid chain; its full sequence is Adenylyl-sulfate kinase (206 aa).

Residue 36–43 coordinates ATP; the sequence is GLSGSGKS. Serine 110 (phosphoserine intermediate) is an active-site residue.

It belongs to the APS kinase family.

It catalyses the reaction adenosine 5'-phosphosulfate + ATP = 3'-phosphoadenylyl sulfate + ADP + H(+). The protein operates within sulfur metabolism; hydrogen sulfide biosynthesis; sulfite from sulfate: step 2/3. Functionally, catalyzes the synthesis of activated sulfate. This is Adenylyl-sulfate kinase (cysC) from Buchnera aphidicola subsp. Acyrthosiphon pisum (strain APS) (Acyrthosiphon pisum symbiotic bacterium).